Here is a 323-residue protein sequence, read N- to C-terminus: Beta-ketoacyl-[acyl-carrier-protein] synthase III 1 (323 aa).

Active-site residues include C114 and H254. The ACP-binding stretch occupies residues Q255–R259. The active site involves N284.

Belongs to the thiolase-like superfamily. FabH family. Homodimer.

The protein localises to the cytoplasm. It carries out the reaction malonyl-[ACP] + acetyl-CoA + H(+) = 3-oxobutanoyl-[ACP] + CO2 + CoA. It participates in lipid metabolism; fatty acid biosynthesis. Its function is as follows. Catalyzes the condensation reaction of fatty acid synthesis by the addition to an acyl acceptor of two carbons from malonyl-ACP. Catalyzes the first condensation reaction which initiates fatty acid synthesis and may therefore play a role in governing the total rate of fatty acid production. Possesses both acetoacetyl-ACP synthase and acetyl transacylase activities. Its substrate specificity determines the biosynthesis of branched-chain and/or straight-chain of fatty acids. The chain is Beta-ketoacyl-[acyl-carrier-protein] synthase III 1 from Lactiplantibacillus plantarum (strain ATCC BAA-793 / NCIMB 8826 / WCFS1) (Lactobacillus plantarum).